Here is an 832-residue protein sequence, read N- to C-terminus: Sodium/hydrogen exchanger 3 (832 aa).

Positions 1 to 29 (MSGRGGCGPCWGLLLALVLALGALPWTQG) are cleaved as a signal peptide. The Extracellular portion of the chain corresponds to 30 to 50 (AEQEHHDEIQGFQIVTFKWHH). A helical transmembrane segment spans residues 51 to 73 (VQDPYIIALWVLVASLAKIVFHL). Residues 74-81 (SHKVTSVV) are Cytoplasmic-facing. A helical transmembrane segment spans residues 82 to 101 (PESALLIVLGLVLGGIVLAA). The Extracellular segment spans residues 102–110 (DHIASFTLT). Residues 111–128 (PTVFFFYLLPPIVLDAGY) traverse the membrane as a helical segment. Over 129–131 (FMP) the chain is Cytoplasmic. Residues 132–167 (NRLFFSNLGSILLYAVVGTVWNAATTGLSLYGVFLS) traverse the membrane as a helical segment. 2 residues coordinate a 1,2-diacyl-sn-glycero-3-phospho-(1D-myo-inositol): G140 and S141. Over 168–180 (GIMGELKIGLLDF) the chain is Extracellular. A helical transmembrane segment spans residues 181-202 (LLFGSLIAAVDPVAVLAVFEEV). The Cytoplasmic portion of the chain corresponds to 203-204 (HV). A helical transmembrane segment spans residues 205-236 (NEVLFIIVFGESLLNDAVTVVLYNVFQSFVTL). At 237–243 (GGDKVTG) the chain is on the extracellular side. Residues 244–278 (VDCVKGIVSFFVVSLGGTLVGVVFAFLLSLVTRFT) traverse the membrane as a helical segment. Topologically, residues 279–280 (KH) are cytoplasmic. A helical membrane pass occupies residues 281-303 (VRVIEPGFVFIISYLSYLTSEML). The Extracellular segment spans residues 304-305 (SL). The chain crosses the membrane as a helical span at residues 306–322 (SSILAITFCGICCQKYV). Topologically, residues 323 to 329 (KANISEQ) are cytoplasmic. A helical membrane pass occupies residues 330 to 358 (SATTVRYTMKMLASGAETIIFMFLGISAV). The Extracellular segment spans residues 359-366 (DPLIWTWN). A helical transmembrane segment spans residues 367-388 (TAFVLLTLLFVSVFRAIGVVLQ). The Cytoplasmic portion of the chain corresponds to 389–401 (TWLLNRYRMVQLE). An a 1,2-diacyl-sn-glycero-3-phospho-(1D-myo-inositol)-binding site is contributed by M397. Residues 402-425 (LIDQVVMSYGGLRGAVAFALVALL) form a helical membrane-spanning segment. Residues 426 to 432 (DGNKVKE) are Extracellular-facing. A helical transmembrane segment spans residues 433 to 466 (KNLFVSTTIIVVFFTVIFQGLTIKPLVQWLKVKR). At 467–832 (SEHREPKLNE…GAEHPESTHM (366 aa)) the chain is on the cytoplasmic side. Residues Q496, I497, and H499 each coordinate a 1,2-diacyl-sn-glycero-3-phospho-(1D-myo-inositol). S554 and S562 each carry phosphoserine. The tract at residues 575-589 (RPSTVEASVSYLLRE) is interaction with EZR. The tract at residues 590 to 667 (SASAVCLDMQ…RKRLESFKSA (78 aa)) is interaction with NHERF4. An interaction with AHCYL1 region spans residues 591-696 (ASAVCLDMQS…AQKRRNSSVP (106 aa)). A phosphoserine mark is found at S592 and S607. S663 is modified (phosphoserine; by SGK1). A disordered region spans residues 664–706 (FKSAKLGLGQSKKATKHKRERERAQKRRNSSVPNGKLPLDSPA). A compositionally biased stretch (basic residues) spans 676–692 (KATKHKRERERAQKRRN). Phosphoserine is present on residues S719, S813, and S816.

It belongs to the monovalent cation:proton antiporter 1 (CPA1) transporter (TC 2.A.36) family. As to quaternary structure, homodimer. Found in the forms of complex and dynamic macromolecular complexes. Interacts with CHP1; this interaction increases trafficking and activity at the plasma membrane of SLC9A3. Interacts with CHP2 and SHANK2. Interacts with NHERF4 and interaction decreases in response to elevated calcium ion levels. Binds NHERF1 and NHERF2. Interacts with PDZK1 (via C-terminal PDZ domain). Interacts with AHCYL1; interaction is required for SLC9A3 activity. Interacts with EZR; interaction targets SLC9A3 to the apical membrane. Interacts with SNX27 (via PDZ domains); directs SLC9A3 membrane insertion from early endosomes to the plasma membrane. Post-translationally, phosphorylated by PKA, which inhibits activity. Phosphorylation at Ser-663 by SGK1 is associated with increased abundance at the cell membrane and activity. Phosphorylation at Ser-719 by CSNK2A1 regulates SLC9A3 activity through the formation of multiple signaling complexes. In terms of tissue distribution, intestinal and kidney specific. Most abundant in kidney cortex, followed equally by ileum and ascending colon, then kidney medulla and jejunum. Is absent from duodenum and descending colon.

Its subcellular location is the apical cell membrane. It localises to the cell membrane. The protein resides in the recycling endosome membrane. It is found in the early endosome membrane. The catalysed reaction is Na(+)(in) + H(+)(out) = Na(+)(out) + H(+)(in). Its activity is regulated as follows. Seems to switch between active and inactive modes in response to various stimuli. Activated directly or indirectly by membrane phosphatidylinositol (PIs). Regulated by a variety of auxiliary proteins, which facilitate the maturation, cell surface expression and function of the transporter. Inhibited specifically by the drug tenapanor. Plasma membrane Na(+)/H(+) antiporter. Exchanges intracellular H(+) ions for extracellular Na(+) in 1:1 stoichiometry, playing a key role in salt and fluid absorption and pH homeostasis. Major apical Na(+)/H(+) exchanger in kidney and intestine playing an important role in renal and intestine Na(+) absorption and blood pressure regulation. The sequence is that of Sodium/hydrogen exchanger 3 (SLC9A3) from Oryctolagus cuniculus (Rabbit).